The sequence spans 195 residues: Cyclin-dependent kinase inhibitor 7 (195 aa).

Positions 1–11 (MSETKPKRDSE) are enriched in basic and acidic residues. Disordered regions lie at residues 1–50 (MSET…SVSD), 61–80 (EEED…SSET), and 117–154 (SSEN…TQAE). Low complexity-rich tracts occupy residues 37–50 (SSSS…SVSD) and 68–80 (SSSI…SSET). Thr-151 is subject to Phosphothreonine; by KIN10.

It belongs to the CDI family. ICK/KRP subfamily. In terms of assembly, specifically interacts with CDKA-1, but not with CDKB1-1. Interacts with CYCD4-1. Binds to FBL17. In terms of processing, ubiquitinated by SCF(FBL17). Ubiquitination leads to its subsequent degradation, thus controlling cell cycle progression. As to expression, expressed in flowers, in developing pollen, and at lower levels in roots and leaves.

The protein resides in the nucleus. It is found in the nucleoplasm. Binds and inhibits CYCD2-1/CDKA-1 complex kinase activity. May target specifically CDKA-1. This chain is Cyclin-dependent kinase inhibitor 7 (KRP7), found in Arabidopsis thaliana (Mouse-ear cress).